The sequence spans 352 residues: Pheromone-regulated membrane protein 6 (352 aa).

The Extracellular segment spans residues 1–36 (MESSLQKLKFQDIDINLIPTAKWTTKLQYILYTWCQ). The helical transmembrane segment at 37–57 (SILHVAMFFSDIYTCIKLLAF) threads the bilayer. Residues 58–76 (NTWSNNIIQPFLEFRISKW) are Cytoplasmic-facing. Residues 77–97 (LFSGCILCSSLILIWELVIGL) form a helical membrane-spanning segment. Residues 98–227 (RVYRKKEITS…VILSFMLFSF (130 aa)) lie on the Extracellular side of the membrane. The chain crosses the membrane as a helical span at residues 228 to 248 (IIWVILISKLILSIIIFIIFI). The Cytoplasmic portion of the chain corresponds to 249-352 (RPRFLSSKRK…FPQKYKHKYI (104 aa)).

This sequence belongs to the KCH1 low affinity K(+) transporter family.

The protein localises to the cell membrane. The protein resides in the bud tip. Its subcellular location is the vacuole lumen. The catalysed reaction is K(+)(in) = K(+)(out). Its function is as follows. Low affinity potassium transporter that, with KCH1, participates in high-affinity Ca(2+) influx system (HACS) activation during the response to mating pheromone. Directly promotes K(+) influx and HACS may electrochemically respond to this K(+) influx. KCH1 and PRM6/KCH2 act at the apex of the calcium signaling pathway that is used for survival during prolonged exposures to mating pheromones. The polypeptide is Pheromone-regulated membrane protein 6 (Saccharomyces cerevisiae (strain ATCC 204508 / S288c) (Baker's yeast)).